The primary structure comprises 321 residues: Cytochrome f (321 aa).

Residues 1-38 (MKKNFYTISKTMSRSLKLILFSVFIGFSIFLIPQPTWA) form the signal peptide. Residues Tyr-39, Cys-59, Cys-62, and His-63 each coordinate heme. The helical transmembrane segment at 288–308 (VIGMIIFFIGVGLSQIMLVLK) threads the bilayer.

Belongs to the cytochrome f family. As to quaternary structure, the 4 large subunits of the cytochrome b6-f complex are cytochrome b6, subunit IV (17 kDa polypeptide, PetD), cytochrome f and the Rieske protein, while the 4 small subunits are PetG, PetL, PetM and PetN. The complex functions as a dimer. The cofactor is heme.

Its subcellular location is the cellular thylakoid membrane. In terms of biological role, component of the cytochrome b6-f complex, which mediates electron transfer between photosystem II (PSII) and photosystem I (PSI), cyclic electron flow around PSI, and state transitions. In Prochlorococcus marinus (strain NATL1A), this protein is Cytochrome f.